Here is a 404-residue protein sequence, read N- to C-terminus: MADKVLKEKRKLFIRSMGEGTINGLLDELLQTRVLNKEEMEKVKRENATVMDKTRALIDSVIPKGAQACQICITYICEEDSYLAGTLGLSADQTSGNYLNMQDSQGVLSSFPAPQAVQDNPAMPTSSGSEGNVKLCSLEEAQRIWKQKSAEIYPIMDKSSRTRLALIICNEEFDSIPRRTGAEVDITGMTMLLQNLGYSVDVKKNLTASDMTTELEAFAHRPEHKTSDSTFLVFMSHGIREGICGKKHSEQVPDILQLNAIFNMLNTKNCPSLKDKPKVIIIQACRGDSPGVVWFKDSVGVSGNLSLPTTEEFEDDAIKKAHIEKDFIAFCSSTPDNVSWRHPTMGSVFIGRLIEHMQEYACSCDVEEIFRKVRFSFEQPDGRAQMPTTERVTLTRCFYLFPGH.

The 91-residue stretch at 1 to 91 (MADKVLKEKR…YLAGTLGLSA (91 aa)) folds into the CARD domain. Residues 1–119 (MADKVLKEKR…SFPAPQAVQD (119 aa)) constitute a propeptide that is removed on maturation. Lysine 134 participates in a covalent cross-link: Glycyl lysine isopeptide (Lys-Gly) (interchain with G-Cter in ubiquitin). Active-site residues include histidine 237 and cysteine 285. The propeptide at 298 to 316 (SVGVSGNLSLPTTEEFEDD) is interdomain linker. The residue at position 302 (serine 302) is a Phosphoserine.

The protein belongs to the peptidase C14A family. In terms of assembly, heterotetramer that consists of two anti-parallel arranged heterodimers, each one formed by a 20 kDa (Caspase-1 subunit p20) and a 10 kDa (Caspase-1 subunit p10) subunit. May be a component of the inflammasome, a protein complex which also includes PYCARD, CARD8 and NLRP2 and whose function would be the activation of pro-inflammatory caspases. Component of the AIM2 PANoptosome complex, a multiprotein complex that drives inflammatory cell death (PANoptosis). Interacts with CARD8; interacts with the released C-terminus of CARD8 which forms an inflammasome and directly activates CASP1 to promote pyroptosis. Both the p10 and p20 subunits interact with MEFV. Interacts with CARD17P/INCA and CARD18. Interacts with SERPINB1; this interaction regulates CASP1 activity. As to quaternary structure, heterotetramer that consists of two anti-parallel arranged heterodimers, each one formed by a 20 kDa (Caspase-1 subunit p20) and a 10 kDa (Caspase-1 subunit p10) subunit. Can form a heterodimer with isoform epsilon which then has an inhibitory effect. Heterotetramer that consists of two anti-parallel arranged heterodimers, each one formed by a 20 kDa (Caspase-1 subunit p20) and a 10 kDa (Caspase-1 subunit p10) subunit. In terms of assembly, can form a heterodimer with Caspase-1 subunit p20 which then has an inhibitory effect. Post-translationally, the two subunits are derived from the precursor sequence by an autocatalytic mechanism. In terms of processing, ubiquitinated via 'Lys-11'-linked polyubiquitination. Deubiquitinated by USP8. Cleavage in the interdomain linker region is required to induce pyroptosis. As to expression, expressed in larger amounts in spleen and lung. Detected in liver, heart, small intestine, colon, thymus, prostate, skeletal muscle, peripheral blood leukocytes, kidney and testis. No expression in the brain.

The protein localises to the cytoplasm. The protein resides in the cell membrane. It catalyses the reaction Strict requirement for an Asp residue at position P1 and has a preferred cleavage sequence of Tyr-Val-Ala-Asp-|-.. Its activity is regulated as follows. (Microbial infection) Specifically inhibited by the cowpox virus Crma protein. Its function is as follows. Thiol protease involved in a variety of inflammatory processes by proteolytically cleaving other proteins, such as the precursors of the inflammatory cytokines interleukin-1 beta (IL1B) and interleukin 18 (IL18) as well as the pyroptosis inducer Gasdermin-D (GSDMD), into active mature peptides. Plays a key role in cell immunity as an inflammatory response initiator: once activated through formation of an inflammasome complex, it initiates a pro-inflammatory response through the cleavage of the two inflammatory cytokines IL1B and IL18, releasing the mature cytokines which are involved in a variety of inflammatory processes. Cleaves a tetrapeptide after an Asp residue at position P1. Also initiates pyroptosis, a programmed lytic cell death pathway, through cleavage of GSDMD. In contrast to cleavage of interleukin IL1B, recognition and cleavage of GSDMD is not strictly dependent on the consensus cleavage site but depends on an exosite interface on CASP1 that recognizes and binds the Gasdermin-D, C-terminal (GSDMD-CT) part. Cleaves and activates CASP7 in response to bacterial infection, promoting plasma membrane repair. Upon inflammasome activation, during DNA virus infection but not RNA virus challenge, controls antiviral immunity through the cleavage of CGAS, rendering it inactive. In apoptotic cells, cleaves SPHK2 which is released from cells and remains enzymatically active extracellularly. Apoptosis inactive. The polypeptide is Caspase-1 (CASP1) (Homo sapiens (Human)).